A 398-amino-acid polypeptide reads, in one-letter code: Protein ELC (398 aa).

Residues 18-162 (ALSQRGPSSV…ARDPPLYSRR (145 aa)) enclose the UEV domain. Positions 157–202 (PLYSRRRPQPPPPSPPTVYDSSLSRPPSADQSLPRPFPPSPYGGGV) are disordered. Over residues 175-187 (YDSSLSRPPSADQ) the composition is skewed to polar residues. Residues 247–291 (EAEAEELLSLQAGLKRREDELNIGLKEMVEEKETLEQQLQIISMN) adopt a coiled-coil conformation. An SB domain is found at 322–390 (DTLSKQMLEC…RAAQMEVQVA (69 aa)).

The protein belongs to the ubiquitin-conjugating enzyme family. UEV subfamily. As to quaternary structure, component of the endosomal sorting required for transport complex I (ESCRT-I), composed of ELC, VPS28 and VPS37. Interacts with VPS28 and VPS37. Binds ubiquitin in vitro. Interacts with FREE1. Interacts with TOL9/TOM1D. Interacts with BRO1/ALIX. Interacts with SINAT1, SINAT2, SINAT3 and SINAT4. Post-translationally, ubiquitinated by SINAT1, SINAT2, SINAT3 and SINAT4 for subsequent proteasomal degradation. Expressed in roots, stems, leaves and flowers.

It localises to the early endosome. It is found in the late endosome. The protein resides in the prevacuolar compartment. Component of the ESCRT-I complex (endosomal sorting complex required for transport I), a regulator of vesicular trafficking process. Required for the sorting of endocytic ubiquitinated cargos into multivesicular bodies (MVBs). May control nuclear division through the microtubule cytoskeleton. The sequence is that of Protein ELC from Arabidopsis thaliana (Mouse-ear cress).